We begin with the raw amino-acid sequence, 54 residues long: Putative neurotoxin-I (54 aa).

3 disulfide bridges follow: cysteine 20-cysteine 42, cysteine 28-cysteine 51, and cysteine 32-cysteine 53.

Expressed by the venom gland.

Its subcellular location is the secreted. The sequence is that of Putative neurotoxin-I from Lychas mucronatus (Chinese swimming scorpion).